The sequence spans 432 residues: Adenosine 3'-phospho 5'-phosphosulfate transporter 1 (432 aa).

The next 9 helical transmembrane spans lie at 5–25, 40–60, 109–129, 154–174, 238–258, 265–285, 299–319, 353–373, and 387–407; these read WWAV…ETPE, VVNA…VQYF, ALKL…WGVL, FLVL…CVLC, WEYL…LSSG, PATT…DSFT, SVQM…GSLL, LFIF…IMTL, and GHTV…ALLL. Phosphoserine is present on S427.

This sequence belongs to the nucleotide-sugar transporter family. SLC35B subfamily.

The protein resides in the golgi apparatus membrane. The catalysed reaction is 3'-phosphoadenylyl sulfate(in) + adenosine 3',5'-bisphosphate(out) = 3'-phosphoadenylyl sulfate(out) + adenosine 3',5'-bisphosphate(in). Functionally, probably functions as a 3'-phosphoadenylyl sulfate:adenosine 3',5'-bisphosphate antiporter at the Golgi membranes. Mediates the transport from the cytosol into the lumen of the Golgi of 3'-phosphoadenylyl sulfate/adenosine 3'-phospho 5'-phosphosulfate (PAPS), a universal sulfuryl donor for sulfation events that take place in that compartment. This Pongo abelii (Sumatran orangutan) protein is Adenosine 3'-phospho 5'-phosphosulfate transporter 1.